The following is a 443-amino-acid chain: Transcriptional adapter 2-alpha (443 aa).

Phosphoserine is present on serine 6. The ZZ-type zinc-finger motif lies at 12–69 (SDKPPCRGCSSYLMEPYIKCAECGPPPFFLCLQCFTRGFEYKKHQSDHTYEIMTSDFP). The Zn(2+) site is built by cysteine 17, cysteine 20, cysteine 31, cysteine 34, cysteine 42, cysteine 45, histidine 55, and histidine 59. Positions 70–122 (VLDPSWTAQEEMALLEAVMDCGFGNWQDVANQMCTKTKEECEKHYMKHFINNP) constitute an SANT domain. Residues lysine 132 and lysine 138 each participate in a glycyl lysine isopeptide (Lys-Gly) (interchain with G-Cter in SUMO2) cross-link. The span at 347 to 359 (LSPSVPMTSNSGR) shows a compositional bias: polar residues. Positions 347 to 372 (LSPSVPMTSNSGRRSAPPLNLTGLPG) are disordered. The 88-residue stretch at 356–443 (NSGRRSAPPL…LIREGYITKA (88 aa)) folds into the SWIRM domain. A DNA-binding region spans residues 426–435 (KTRKIYDFLI).

Interacts with GCN5 and NR3C1. Associated with the P/CAF protein in the PCAF complex. Component of the PCAF complex, at least composed of TADA2L/ADA2, TADA3L/ADA3, TAF5L/PAF65-beta, TAF6L/PAF65-alpha, TAF10/TAFII30, TAF12/TAFII20, TAF9/TAFII31 and TRRAP. Component of the ADA2A-containing complex (ATAC), composed of KAT14, KAT2A, TADA2L, TADA3L, ZZ3, MBIP, WDR5, YEATS2, CCDC101 and DR1. Interacts with CCDC134.

Its subcellular location is the nucleus. It is found in the chromosome. Its function is as follows. Component of the ATAC complex, a complex with histone acetyltransferase activity on histones H3 and H4. Required for the function of some acidic activation domains, which activate transcription from a distant site. Binds double-stranded DNA. Binds dinucleosomes, probably at the linker region between neighboring nucleosomes. Plays a role in chromatin remodeling. May promote TP53/p53 'Lys-321' acetylation, leading to reduced TP53 stability and transcriptional activity. May also promote XRCC6 acetylation thus facilitating cell apoptosis in response to DNA damage. This Bos taurus (Bovine) protein is Transcriptional adapter 2-alpha (TADA2A).